Consider the following 57-residue polypeptide: UPF0434 protein swp_2279 (57 aa).

The protein belongs to the UPF0434 family.

The chain is UPF0434 protein swp_2279 from Shewanella piezotolerans (strain WP3 / JCM 13877).